The primary structure comprises 205 residues: Glutathione peroxidase 1 (205 aa).

At Ser-37 the chain carries Phosphoserine. Sec-52 is a catalytic residue. Sec-52 is a non-standard amino acid (selenocysteine). Lys-91 and Lys-117 each carry N6-acetyllysine; alternate. Residues Lys-91 and Lys-117 each carry the N6-succinyllysine; alternate modification. Lys-117 carries N-linked (Glc) (glycation) lysine; in vitro glycosylation. N6-acetyllysine is present on Lys-124. An N6-acetyllysine; alternate modification is found at Lys-151. The residue at position 151 (Lys-151) is an N6-succinyllysine; alternate. Phosphoserine is present on residues Ser-200 and Ser-204.

The protein belongs to the glutathione peroxidase family. In terms of assembly, homotetramer. Interacts with MIEN1. During periods of oxidative stress, Sec-52 may react with a superoxide radical, irreversibly lose hydroselenide and be converted to dehydroalanine.

The protein resides in the cytoplasm. It is found in the mitochondrion. The catalysed reaction is 2 glutathione + H2O2 = glutathione disulfide + 2 H2O. The enzyme catalyses a hydroperoxy polyunsaturated fatty acid + 2 glutathione = a hydroxy polyunsaturated fatty acid + glutathione disulfide + H2O. It catalyses the reaction tert-butyl hydroperoxide + 2 glutathione = tert-butanol + glutathione disulfide + H2O. It carries out the reaction cumene hydroperoxide + 2 glutathione = 2-phenylpropan-2-ol + glutathione disulfide + H2O. The catalysed reaction is (13S)-hydroperoxy-(9Z,11E)-octadecadienoate + 2 glutathione = (13S)-hydroxy-(9Z,11E)-octadecadienoate + glutathione disulfide + H2O. The enzyme catalyses (9S)-hydroperoxy-(10E,12Z)-octadecadienoate + 2 glutathione = (9S)-hydroxy-(10E,12Z)-octadecadienoate + glutathione disulfide + H2O. It catalyses the reaction (5S)-hydroperoxy-(6E,8Z,11Z,14Z)-eicosatetraenoate + 2 glutathione = (5S)-hydroxy-(6E,8Z,11Z,14Z)-eicosatetraenoate + glutathione disulfide + H2O. It carries out the reaction (12S)-hydroperoxy-(5Z,8Z,10E,14Z)-eicosatetraenoate + 2 glutathione = (12S)-hydroxy-(5Z,8Z,10E,14Z)-eicosatetraenoate + glutathione disulfide + H2O. The catalysed reaction is (12R)-hydroperoxy-(5Z,8Z,10E,14Z)-eicosatetraenoate + 2 glutathione = (12R)-hydroxy-(5Z,8Z,10E,14Z)-eicosatetraenoate + glutathione disulfide + H2O. The enzyme catalyses (15S)-hydroperoxy-(5Z,8Z,11Z,13E)-eicosatetraenoate + 2 glutathione = (15S)-hydroxy-(5Z,8Z,11Z,13E)-eicosatetraenoate + glutathione disulfide + H2O. It catalyses the reaction (5S)-hydroperoxy-(6E,8Z,11Z,14Z,17Z)-eicosapentaenoate + 2 glutathione = (5S)-hydroxy-(6E,8Z,11Z,14Z,17Z)-eicosapentaenoate + glutathione disulfide + H2O. It carries out the reaction (15S)-hydroperoxy-(5Z,8Z,11Z,13E,17Z)-eicosapentaenoate + 2 glutathione = (15S)-hydroxy-(5Z,8Z,11Z,13E,17Z)-eicosapentaenoate + glutathione disulfide + H2O. The catalysed reaction is (15S)-hydroperoxy-(11Z,13E)-eicosadienoate + 2 glutathione = (15S)-hydroxy-(11Z,13E)-eicosadienoate + glutathione disulfide + H2O. The enzyme catalyses (17S)-hydroperoxy-(4Z,7Z,10Z,13Z,15E,19Z)-docosahexaenoate + 2 glutathione = (17S)-hydroxy-(4Z,7Z,10Z,13Z,15E,19Z)-docosahexaenoate + glutathione disulfide + H2O. Catalyzes the reduction of hydroperoxides in a glutathione-dependent manner thus regulating cellular redox homeostasis. Can reduce small soluble hydroperoxides such as H2O2, cumene hydroperoxide and tert-butyl hydroperoxide, as well as several fatty acid-derived hydroperoxides. In platelets catalyzes the reduction of 12-hydroperoxyeicosatetraenoic acid, the primary product of the arachidonate 12-lipoxygenase pathway. The protein is Glutathione peroxidase 1 (GPX1) of Bos taurus (Bovine).